The sequence spans 105 residues: Putative regulatory protein COPRO5265_1186 (105 aa).

The disordered stretch occupies residues 76 to 105 (RLEEEEEEEERTEPITEQEAELEEESGEDV). Positions 78–105 (EEEEEEEERTEPITEQEAELEEESGEDV) are enriched in acidic residues.

This sequence belongs to the RemA family.

The chain is Putative regulatory protein COPRO5265_1186 from Coprothermobacter proteolyticus (strain ATCC 35245 / DSM 5265 / OCM 4 / BT).